Here is a 1011-residue protein sequence, read N- to C-terminus: Collagen alpha-2(I) chain (1011 aa).

Residues 1-1011 form a disordered region; it reads SGGFDFSFLP…FGYEGDFYRA (1011 aa). 4-hydroxyproline occurs at positions 10, 13, 35, and 41. Residues 28–67 show a composition bias toward low complexity; that stretch reads LMGPRGPPGASGAPGPQGFQGPAGEPGEPGQTGPAGARGP. Lysine 106 is modified (5-hydroxylysine; alternate). An O-linked (Gal...) hydroxylysine; alternate glycan is attached at lysine 106. Low complexity predominate over residues 167–182; that stretch reads SVGPVGPAGPIGSAGP. Residues 282-291 are compositionally biased toward gly residues; that stretch reads GESGGKGEPG. The segment covering 292 to 302 has biased composition (low complexity); it reads SAGPQGPPGSS. The span at 323 to 332 shows a compositional bias: gly residues; sequence GLRGGPGSRG. Residues 345 to 361 are compositionally biased toward low complexity; the sequence is PAGARGASGPAGVRGPS. A 4-hydroxyproline mark is found at proline 367 and proline 370. The segment covering 396 to 415 has biased composition (low complexity); that stretch reads LPGIDGRPGPIGPAGARGEA. The span at 464–473 shows a compositional bias: gly residues; sequence GVQGGKGEQG. Composition is skewed to low complexity over residues 520-537 and 549-559; these read PGES…SRGP and EPGVVGAPGTA. Residues 560 to 578 are compositionally biased toward gly residues; that stretch reads GPAGSGGPGERGAAGIPGG. 2 stretches are compositionally biased toward low complexity: residues 588-635 and 642-662; these read RGEV…PRGS and VGPA…QPGA. Residues 663-672 are compositionally biased toward basic and acidic residues; that stretch reads KGERGTKGPK. Residues 680 to 690 are compositionally biased toward low complexity; it reads PTGPVGSAGPA. Positions 700–709 are enriched in gly residues; it reads GSRGDGGPPG. The span at 711–720 shows a compositional bias: low complexity; the sequence is TGFPGAAGRT. The segment covering 757-766 has biased composition (gly residues); it reads GETGAGGPPG. Composition is skewed to low complexity over residues 774–801 and 809–819; these read SGEP…LGLP and LPGVAGAVGEP. Over residues 820 to 834 the composition is skewed to gly residues; the sequence is GPLGIGPPGARGDGL. Low complexity-rich tracts occupy residues 843-856 and 872-887; these read YAGN…AGAP and EPGP…ALGP. Basic and acidic residues predominate over residues 897-908; it reads RGDKGEPGEKGP. Pro residues predominate over residues 981 to 993; the sequence is SGPPGPPGPPGPP.

The protein belongs to the fibrillar collagen family. In terms of assembly, trimers of one alpha 2(I) and two alpha 1(I) chains. Interacts (via C-terminus) with TMEM131 (via PapD-L domain); the interaction is direct and is involved in assembly and TRAPPIII ER-to-Golgi transport complex-dependent secretion of collagen. In terms of processing, prolines at the third position of the tripeptide repeating unit (G-X-Y) are hydroxylated in some or all of the chains. Expressed in bones.

Its subcellular location is the secreted. It localises to the extracellular space. The protein localises to the extracellular matrix. In terms of biological role, type I collagen is a member of group I collagen (fibrillar forming collagen). The protein is Collagen alpha-2(I) chain of Neocnus comes (Miller's Hispaniolan ground sloth).